Here is a 251-residue protein sequence, read N- to C-terminus: MWIGIISLFPEMFKAITDFGVTGRAVKQDLLQIQCWNPRDFTFDKHKTVDDRPYGGGPGMLMMVQPLRDAIHAAKQAAKAEDGVEAKVIYLSPQGRKLDQQGVKTLASNQKLILICGRYEGVDERLIQTEVDEEWSIGDYVLTGGELPAMTLIDAVARFVPGVLGKQASADEDSFATGLLDCPHYTRPEMLDGIPVPEVLMSGHHENIRKWRLEQSLERTWLRRPELLDSLALTDEQRVLLAKIKKQHKIS.

Residues Gly-117 and 137–142 (IGDYVL) contribute to the S-adenosyl-L-methionine site.

It belongs to the RNA methyltransferase TrmD family. As to quaternary structure, homodimer.

It localises to the cytoplasm. It carries out the reaction guanosine(37) in tRNA + S-adenosyl-L-methionine = N(1)-methylguanosine(37) in tRNA + S-adenosyl-L-homocysteine + H(+). In terms of biological role, specifically methylates guanosine-37 in various tRNAs. This is tRNA (guanine-N(1)-)-methyltransferase from Actinobacillus pleuropneumoniae serotype 5b (strain L20).